A 340-amino-acid chain; its full sequence is Eukaryotic translation initiation factor 3 subunit I (340 aa).

WD repeat units follow at residues 8–47, 50–89, 91–135, 150–189, 194–233, and 291–330; these read GHER…RLGT, GHQG…CVKV, DFPT…GEGN, CEQS…QLQN, EFDY…VMKT, and GHFG…FDFM.

The protein belongs to the eIF-3 subunit I family. In terms of assembly, component of the eukaryotic translation initiation factor 3 (eIF-3) complex.

Its subcellular location is the cytoplasm. Functionally, component of the eukaryotic translation initiation factor 3 (eIF-3) complex, which is involved in protein synthesis of a specialized repertoire of mRNAs and, together with other initiation factors, stimulates binding of mRNA and methionyl-tRNAi to the 40S ribosome. The eIF-3 complex specifically targets and initiates translation of a subset of mRNAs involved in cell proliferation. The protein is Eukaryotic translation initiation factor 3 subunit I of Coccidioides immitis (strain RS) (Valley fever fungus).